Consider the following 534-residue polypeptide: CTP synthase (534 aa).

Residues 1-266 (MKQKFIFVTG…DELIVARLGL (266 aa)) form an amidoligase domain region. Serine 14 lines the CTP pocket. Serine 14 provides a ligand contact to UTP. ATP contacts are provided by residues 15-20 (SIGKGL) and aspartate 72. Residues aspartate 72 and glutamate 140 each contribute to the Mg(2+) site. CTP contacts are provided by residues 147–149 (DIE), 187–192 (KSKPTQ), and lysine 223. UTP contacts are provided by residues 187–192 (KSKPTQ) and lysine 223. The Glutamine amidotransferase type-1 domain occupies 291-534 (KIGVVGKYVD…HFVKASLKKK (244 aa)). L-glutamine is bound at residue glycine 353. Cysteine 380 acts as the Nucleophile; for glutamine hydrolysis in catalysis. Residues 381-384 (FGMQ), glutamate 404, and arginine 464 contribute to the L-glutamine site. Catalysis depends on residues histidine 509 and glutamate 511.

It belongs to the CTP synthase family. As to quaternary structure, homotetramer.

The catalysed reaction is UTP + L-glutamine + ATP + H2O = CTP + L-glutamate + ADP + phosphate + 2 H(+). It carries out the reaction L-glutamine + H2O = L-glutamate + NH4(+). The enzyme catalyses UTP + NH4(+) + ATP = CTP + ADP + phosphate + 2 H(+). It functions in the pathway pyrimidine metabolism; CTP biosynthesis via de novo pathway; CTP from UDP: step 2/2. With respect to regulation, allosterically activated by GTP, when glutamine is the substrate; GTP has no effect on the reaction when ammonia is the substrate. The allosteric effector GTP functions by stabilizing the protein conformation that binds the tetrahedral intermediate(s) formed during glutamine hydrolysis. Inhibited by the product CTP, via allosteric rather than competitive inhibition. Its function is as follows. Catalyzes the ATP-dependent amination of UTP to CTP with either L-glutamine or ammonia as the source of nitrogen. Regulates intracellular CTP levels through interactions with the four ribonucleotide triphosphates. This chain is CTP synthase, found in Bdellovibrio bacteriovorus (strain ATCC 15356 / DSM 50701 / NCIMB 9529 / HD100).